Reading from the N-terminus, the 630-residue chain is Glutamyl-tRNA(Gln) amidotransferase subunit E (630 aa).

This sequence belongs to the GatB/GatE family. GatE subfamily. As to quaternary structure, heterodimer of GatD and GatE.

It carries out the reaction L-glutamyl-tRNA(Gln) + L-glutamine + ATP + H2O = L-glutaminyl-tRNA(Gln) + L-glutamate + ADP + phosphate + H(+). Functionally, allows the formation of correctly charged Gln-tRNA(Gln) through the transamidation of misacylated Glu-tRNA(Gln) in organisms which lack glutaminyl-tRNA synthetase. The reaction takes place in the presence of glutamine and ATP through an activated gamma-phospho-Glu-tRNA(Gln). The GatDE system is specific for glutamate and does not act on aspartate. The chain is Glutamyl-tRNA(Gln) amidotransferase subunit E from Methanocaldococcus jannaschii (strain ATCC 43067 / DSM 2661 / JAL-1 / JCM 10045 / NBRC 100440) (Methanococcus jannaschii).